The following is a 228-amino-acid chain: Ribosomal RNA small subunit methyltransferase G (228 aa).

S-adenosyl-L-methionine-binding positions include Gly-89, Leu-94, 140 to 141 (VE), and Arg-159.

This sequence belongs to the methyltransferase superfamily. RNA methyltransferase RsmG family.

Its subcellular location is the cytoplasm. The enzyme catalyses guanosine(527) in 16S rRNA + S-adenosyl-L-methionine = N(7)-methylguanosine(527) in 16S rRNA + S-adenosyl-L-homocysteine. Its function is as follows. Specifically methylates the N7 position of guanine in position 527 of 16S rRNA. The sequence is that of Ribosomal RNA small subunit methyltransferase G from Burkholderia vietnamiensis (strain G4 / LMG 22486) (Burkholderia cepacia (strain R1808)).